The primary structure comprises 33 residues: Alpha-amanitin proprotein 2 (33 aa).

The propeptide occupies 1-10; sequence MSDINATRLP. Residue I11 is modified to (3R,4R)-4,5-dihydroxyisoleucine; in form alpha-amanitin. I11 carries the post-translational modification (3R,4S)-4-hydroxyisoleucine; in form gamma-amanitin. Positions 11-18 form a cross-link, cyclopeptide (Ile-Pro); sequence IWGIGCNP. Positions 12 to 16 form a cross-link, 2'-cysteinyl-6'-hydroxytryptophan sulfoxide (Trp-Cys); that stretch reads WGIGC. P18 is modified (4-hydroxyproline). Positions 19-33 are excised as a propeptide; that stretch reads CVGDDVTSVLTRGEA.

This sequence belongs to the MSDIN fungal toxin family. Post-translationally, processed by the macrocyclase-peptidase enzyme POPB to yield a toxic cyclic octapeptide. POPB first removes 10 residues from the N-terminus. Conformational trapping of the remaining peptide forces the enzyme to release this intermediate rather than proceed to macrocyclization. The enzyme rebinds the remaining peptide in a different conformation and catalyzes macrocyclization of the N-terminal 8 residues. Expressed in basidiocarps.

Major toxin belonging to the bicyclic octapeptides amatoxins that acts by binding non-competitively to RNA polymerase II and greatly slowing the elongation of transcripts from target promoters. This Amanita exitialis (Guangzhou destroying angel) protein is Alpha-amanitin proprotein 2.